The sequence spans 37 residues: Cytochrome b6-f complex subunit 5 (37 aa).

Residues 5 to 25 (LLSGIVLGLIPVTLAGLFVTA) traverse the membrane as a helical segment.

This sequence belongs to the PetG family. The 4 large subunits of the cytochrome b6-f complex are cytochrome b6, subunit IV (17 kDa polypeptide, PetD), cytochrome f and the Rieske protein, while the 4 small subunits are PetG, PetL, PetM and PetN. The complex functions as a dimer.

It is found in the plastid. Its subcellular location is the chloroplast thylakoid membrane. In terms of biological role, component of the cytochrome b6-f complex, which mediates electron transfer between photosystem II (PSII) and photosystem I (PSI), cyclic electron flow around PSI, and state transitions. PetG is required for either the stability or assembly of the cytochrome b6-f complex. The chain is Cytochrome b6-f complex subunit 5 from Chlorokybus atmophyticus (Soil alga).